The following is a 390-amino-acid chain: UPF0229 protein ABC1477 (390 aa).

Disordered regions lie at residues 1–31 and 81–118; these read MEKDNGRQFTISQENWSLHRKGFQDQRRHQE and VGQGKGDSKIGDIVARDPNGDKQAGAGKGSGAGDQAGE. Positions 7–16 are enriched in polar residues; the sequence is RQFTISQENW. Composition is skewed to basic and acidic residues over residues 22 to 31 and 86 to 100; these read GFQDQRRHQE and GDSKIGDIVARDPNG.

The protein belongs to the UPF0229 family.

The sequence is that of UPF0229 protein ABC1477 from Shouchella clausii (strain KSM-K16) (Alkalihalobacillus clausii).